We begin with the raw amino-acid sequence, 337 residues long: UDP-N-acetylenolpyruvoylglucosamine reductase (337 aa).

Residues 17–186 (IEAKAKQFIA…TSVIYKLTKR (170 aa)) enclose the FAD-binding PCMH-type domain. Arg162 is an active-site residue. Ser237 functions as the Proton donor in the catalytic mechanism. The active site involves Glu333.

It belongs to the MurB family. Requires FAD as cofactor.

It localises to the cytoplasm. The catalysed reaction is UDP-N-acetyl-alpha-D-muramate + NADP(+) = UDP-N-acetyl-3-O-(1-carboxyvinyl)-alpha-D-glucosamine + NADPH + H(+). It participates in cell wall biogenesis; peptidoglycan biosynthesis. In terms of biological role, cell wall formation. In Flavobacterium johnsoniae (strain ATCC 17061 / DSM 2064 / JCM 8514 / BCRC 14874 / CCUG 350202 / NBRC 14942 / NCIMB 11054 / UW101) (Cytophaga johnsonae), this protein is UDP-N-acetylenolpyruvoylglucosamine reductase.